Consider the following 284-residue polypeptide: UPF0276 protein PA14_21580 (284 aa).

The protein belongs to the UPF0276 family.

This chain is UPF0276 protein PA14_21580, found in Pseudomonas aeruginosa (strain UCBPP-PA14).